A 28-amino-acid chain; its full sequence is Phospholipase A2 (28 aa).

Gly28 is a Ca(2+) binding site.

Ca(2+) serves as cofactor. As to expression, expressed by the venom gland.

The protein localises to the secreted. The enzyme catalyses a 1,2-diacyl-sn-glycero-3-phosphocholine + H2O = a 1-acyl-sn-glycero-3-phosphocholine + a fatty acid + H(+). Its function is as follows. PLA2 catalyzes the calcium-dependent hydrolysis of the 2-acyl groups in 3-sn-phosphoglycerides. The chain is Phospholipase A2 from Scolopendra dehaani (Thai centipede).